The sequence spans 460 residues: Putative protein p41 (460 aa).

The region spanning 14-186 (INHLLDIKRS…WGQAWFVDQG (173 aa)) is the Helicase ATP-binding domain.

This is Putative protein p41 (41) from Escherichia coli (Bacteriophage APSE-1).